A 33-amino-acid polypeptide reads, in one-letter code: CTPSGTICSPEAPEQCCSNSCVPHQWLRIFVCA.

Intrachain disulfides connect C1–C17, C8–C21, and C16–C32.

In terms of tissue distribution, expressed in leaves and fruit flesh (at protein level).

Inhibits trypsin (IC(50)=471 nM). This Beta vulgaris subsp. vulgaris (Beet) protein is Trypsin inhibitor 1.